The chain runs to 404 residues: Major outer membrane porin (404 aa).

The signal sequence occupies residues 1-22 (MKKLLKSVLAFAVLGSASSLHA). Positions 85–110 (GPVPTTTDTDAAADITTSTPRENPAY) are disordered. The segment covering 89–103 (TTTDTDAAADITTST) has biased composition (low complexity).

It belongs to the chlamydial porin (CP) (TC 1.B.2) family. As to quaternary structure, part of a disulfide cross-linked outer membrane complex (COMC) composed of the major outer membrane porin (MOMP), the small cysteine-rich protein (OmcA) and the large cysteine-rich periplasmic protein (OmcB).

The protein resides in the cell outer membrane. Functionally, in elementary bodies (EBs, the infectious stage, which is able to survive outside the host cell) provides the structural integrity of the outer envelope through disulfide cross-links with the small cysteine-rich protein and the large cysteine-rich periplasmic protein. It has been described in publications as the Sarkosyl-insoluble COMC (Chlamydia outer membrane complex), and serves as the functional equivalent of peptidoglycan. In terms of biological role, permits diffusion of specific solutes through the outer membrane. The chain is Major outer membrane porin (ompA) from Chlamydia muridarum.